The primary structure comprises 652 residues: Forkhead box protein O1-A (652 aa).

Disordered regions lie at residues 1 to 57 (MADA…EPSS), 208 to 277 (SSWW…NSHS), and 359 to 406 (NLLS…QQTQ). Residues 41-57 (DSNTSSPAPSVKQEPSS) are compositionally biased toward polar residues. Positions 134–228 (WGNMSYADLI…KSGKSPRRRA (95 aa)) form a DNA-binding region, fork-head. Residues 238 to 249 (AKSRGRAAKKKL) are compositionally biased toward basic residues. Low complexity predominate over residues 362-397 (SPKNPSTGGPGSGSNQSSPSSLMQASPGYSPYSSPG).

Its subcellular location is the cytoplasm. The protein resides in the nucleus. In terms of biological role, transcription factor that regulates metabolic homeostasis in response to oxidative stress. Binds to the consensus sequence 5'-TT[G/A]TTTTG-3' and the related Daf-16 family binding element (DBE) with consensus sequence 5'-TT[G/A]TTTAC-3'. Main regulator of redox balance and osteoblast numbers and controls bone mass. Orchestrates the endocrine function of the skeleton in regulating glucose metabolism. May be involved in regulating cellular homeostasis in the eye. May act as a positive regulator of apoptosis in cardiac smooth muscle cells as a result of its transcriptional activation of pro-apoptotic genes. The protein is Forkhead box protein O1-A (foxo1a) of Danio rerio (Zebrafish).